The chain runs to 979 residues: Pro-apoptotic serine protease NMA111 (979 aa).

Residues 1–20 (MKRNGESHLNGEAKKSRTEQ) are compositionally biased toward basic and acidic residues. The interval 1 to 43 (MKRNGESHLNGEAKKSRTEQNQEQQDYQDEYYSSSDEELLPSS) is disordered. Positions 21–34 (NQEQQDYQDEYYSS) are enriched in low complexity. The tract at residues 65–260 (KVVNSVVSIQ…LPVSRPKRAL (196 aa)) is serine protease. Catalysis depends on charge relay system residues His-108, Asp-139, and Ser-222. 2 PDZ domains span residues 277–362 (EWQL…FVFQ) and 871–943 (PHYG…VSFD).

This sequence belongs to the peptidase S1C family.

The protein localises to the nucleus. Nuclear serine protease which mediates apoptosis. The protein is Pro-apoptotic serine protease NMA111 (NMA111) of Lodderomyces elongisporus (strain ATCC 11503 / CBS 2605 / JCM 1781 / NBRC 1676 / NRRL YB-4239) (Yeast).